The following is a 271-amino-acid chain: Insulin-like growth factor-binding protein 5 (271 aa).

An N-terminal signal peptide occupies residues 1-19 (MVLTAVLLLLAACAGSAQG). Residues 22–102 (SFVHCEPCDE…LHGRGVCLNE (81 aa)) form the IGFBP N-terminal domain. 6 disulfides stabilise this stretch: Cys26–Cys52, Cys29–Cys54, Cys37–Cys55, Cys44–Cys58, Cys66–Cys79, and Cys73–Cys99. The span at 109–121 (AKIERDSREHEEP) shows a compositional bias: basic and acidic residues. The segment at 109 to 129 (AKIERDSREHEEPTTSEMAEE) is disordered. Ser115 carries the post-translational modification Phosphoserine. The region spanning 188-262 (QGPCRRHMEA…MEYVDGDFQC (75 aa)) is the Thyroglobulin type-1 domain. 3 cysteine pairs are disulfide-bonded: Cys191-Cys218, Cys229-Cys240, and Cys242-Cys262.

As to quaternary structure, interacts with IGF1; this interaction enhances the growth stimulatory effects of IGF1 on fibroblasts. Interacts with CAV1; this interaction allows trafficking of IGFBP5 from the plasma membrane to the nucleus. Interacts with NCL; this interaction is necessary for IGFBP5 localization to the nucleus.

The protein resides in the secreted. Its subcellular location is the cytoplasm. It is found in the nucleus. Multifunctional protein that plays a critical role in regulating the availability of IGFs to their receptors and thereby regulates IGF-mediated cellular processes including proliferation, differentiation, and apoptosis in a cell-type specific manner. Increases the cell proliferation of osteoblasts, intestinal smooth muscle cells and neuroblastoma cells. Enhances adhesion and survival of epithelial cells but decreases adhesion of mesenchymal cells. Once secreted, acts as a major mediator of mTORC1-dependent feedback inhibition of IGF1 signaling. Also plays a role in the induction of extracellular matrix (ECM) production and deposition independently of its nuclear translocation and binding to IGFs. Acts itself as a growth factor that can act independently of IGFs to regulate bone formation. Acts as a ligand for the ROR1 receptor which triggers formation of ROR1/HER2 heterodimer to enhance CREB oncogenic signaling. The protein is Insulin-like growth factor-binding protein 5 (IGFBP5) of Bos taurus (Bovine).